We begin with the raw amino-acid sequence, 1342 residues long: DNA-directed RNA polymerase subunit beta (1342 aa).

The protein belongs to the RNA polymerase beta chain family. In terms of assembly, the RNAP catalytic core consists of 2 alpha, 1 beta, 1 beta' and 1 omega subunit. When a sigma factor is associated with the core the holoenzyme is formed, which can initiate transcription.

The catalysed reaction is RNA(n) + a ribonucleoside 5'-triphosphate = RNA(n+1) + diphosphate. Its function is as follows. DNA-dependent RNA polymerase catalyzes the transcription of DNA into RNA using the four ribonucleoside triphosphates as substrates. In Pectobacterium atrosepticum (strain SCRI 1043 / ATCC BAA-672) (Erwinia carotovora subsp. atroseptica), this protein is DNA-directed RNA polymerase subunit beta.